The primary structure comprises 185 residues: Large ribosomal subunit protein uL5 (185 aa).

This sequence belongs to the universal ribosomal protein uL5 family. In terms of assembly, part of the 50S ribosomal subunit; part of the 5S rRNA/L5/L18/L25 subcomplex. Contacts the 5S rRNA and the P site tRNA. Forms a bridge to the 30S subunit in the 70S ribosome.

This is one of the proteins that bind and probably mediate the attachment of the 5S RNA into the large ribosomal subunit, where it forms part of the central protuberance. In the 70S ribosome it contacts protein S13 of the 30S subunit (bridge B1b), connecting the 2 subunits; this bridge is implicated in subunit movement. Contacts the P site tRNA; the 5S rRNA and some of its associated proteins might help stabilize positioning of ribosome-bound tRNAs. The sequence is that of Large ribosomal subunit protein uL5 from Nitrobacter hamburgensis (strain DSM 10229 / NCIMB 13809 / X14).